Reading from the N-terminus, the 438-residue chain is CBL-interacting protein kinase 32 (438 aa).

One can recognise a Protein kinase domain in the interval 13 to 268 (YELGRTIGEG…IPEILEDEWF (256 aa)). ATP contacts are provided by residues 19–27 (IGEGTFAKV) and lysine 42. The active-site Proton acceptor is aspartate 136. Residues 154-183 (DFGLSALSQQIKDDGLLHTTCGTPNYVAPE) are activation loop. The 25-residue stretch at 305-329 (EEPEALNAFELISMSAGLNLGNLFD) folds into the NAF domain. Residues 335 to 364 (KRETRFTSKCPPKEIVRKIEEAAKPLGFDV) form a PPI region.

This sequence belongs to the protein kinase superfamily. CAMK Ser/Thr protein kinase family. SNF1 subfamily. Requires Mn(2+) as cofactor.

The enzyme catalyses L-seryl-[protein] + ATP = O-phospho-L-seryl-[protein] + ADP + H(+). The catalysed reaction is L-threonyl-[protein] + ATP = O-phospho-L-threonyl-[protein] + ADP + H(+). CIPK serine-threonine protein kinases interact with CBL proteins. Binding of a CBL protein to the regulatory NAF domain of CIPK protein lead to the activation of the kinase in a calcium-dependent manner. This chain is CBL-interacting protein kinase 32 (CIPK32), found in Oryza sativa subsp. japonica (Rice).